Consider the following 172-residue polypeptide: Mitochondrial import inner membrane translocase subunit Tim17-B (172 aa).

Cys-9 and Cys-78 are disulfide-bonded. A run of 3 helical transmembrane segments spans residues Cys-17 to Phe-37, Gln-61 to Asp-77, and Val-113 to Leu-133. The tract at residues Phe-147 to His-172 is disordered.

The protein belongs to the Tim17/Tim22/Tim23 family. In terms of assembly, component of the TIM23 complex at least composed of TIMM23, TIMM17 (TIMM17A or TIMM17B) and TIMM50. The complex interacts with the TIMM44 component of the PAM complex. The complex also interacts with DNAJC15.

It localises to the mitochondrion inner membrane. Essential component of the TIM23 complex, a complex that mediates the translocation of transit peptide-containing proteins across the mitochondrial inner membrane. The polypeptide is Mitochondrial import inner membrane translocase subunit Tim17-B (Timm17b) (Mus musculus (Mouse)).